Reading from the N-terminus, the 201-residue chain is Recombination protein RecR (201 aa).

A C4-type zinc finger spans residues 57–72; that stretch reads CADCRTFTEQEHCTIC. The 96-residue stretch at 81 to 176 folds into the Toprim domain; sequence GQICVVESPA…LASRIAHGVP (96 aa).

Belongs to the RecR family.

Functionally, may play a role in DNA repair. It seems to be involved in an RecBC-independent recombinational process of DNA repair. It may act with RecF and RecO. The protein is Recombination protein RecR of Yersinia pestis bv. Antiqua (strain Antiqua).